A 283-amino-acid chain; its full sequence is Small aggregate formation protein (283 aa).

The protein localises to the cytoplasm. In terms of biological role, knockout of the gene for this protein causes small aggregate formation. May regulate the secretion or processing of a secreted factor that regulates aggregate size. This chain is Small aggregate formation protein (smlA), found in Dictyostelium discoideum (Social amoeba).